Reading from the N-terminus, the 13477-residue chain is Mucin-3B (13477 aa).

The signal sequence occupies residues 1–21; sequence MQLLGLLSILWMLKSSPGATG. Over residues 219-234 the composition is skewed to low complexity; that stretch reads TISSTTRTTERTPLPT. Disordered stretches follow at residues 219–243, 327–347, 360–383, 513–559, 622–643, 815–839, 923–968, 1154–1179, 1480–1511, 1529–1601, 1619–1638, 1692–1714, 1944–1968, 2064–2123, 2170–2197, 2275–2308, 2442–2462, 2476–2497, 2509–2537, 2591–2610, 2672–2717, 2812–2832, 2845–2867, 2922–2947, 3074–3109, 3309–3395, 3420–3481, 3545–3565, 3654–3727, 3740–3812, 4014–4047, 4067–4106, 4182–4249, 4269–4313, 4510–4530, 4557–4617, 4630–4651, 4802–4830, 4953–4986, 5128–5203, 5455–5486, 5627–5680, 5834–5908, 5957–5977, 5990–6017, 6030–6080, 6120–6150, 6172–6197, 6456–6481, 6541–6598, 6846–6867, 6946–6971, 6999–7021, 7067–7093, 7170–7206, 7225–7244, 7299–7329, 7400–7433, 7476–7532, 7578–7600, 7731–7766, 7922–7996, 8036–8066, 8088–8113, 8372–8397, 8457–8514, 8762–8783, 8862–8887, 8915–8941, 8983–9009, 9052–9122, 9141–9160, 9215–9240, 9335–9366, 9409–9465, 9566–9589, 9612–9674, 9734–9760, 9828–9859, 9883–9908, 9921–9973, 10076–10099, 10120–10166, 10189–10285, 10389–10425, 10462–10481, 10501–10537, 10640–10660, 10750–10828, 10887–11032, 11044–11065, 11276–11317, 11446–11482, 11566–11697, 11754–11779, 11818–11949, 12067–12103, 12186–12220, 12280–12323, 12364–12452, 12468–12578, 12616–12639, 12681–12700, 12785–12805, 12985–13011, and 13052–13086; these read TISS…TMSP, TRST…TVTD, GTLS…TPMT, SMTT…PSTL, ATTP…STPS, TTTN…TGTG, TSQT…STTE, PSMS…TSTL, SPTV…STEN, SISA…FPET, MTST…VTSM, TTST…TDSM, TTSA…TFTS, TPNA…IAKS, STSM…SGGI, SSSM…AEST, RSTP…VKGS, LSME…TATT, SHST…GPPT, SAMS…TETS, TSTL…FSSS, TTIT…STST, TMTE…STTE, SRIP…SVGI, ETPS…TPDI, TTSH…NSNS, ITTT…SHST, STTS…STPS, SITT…STTA, ITTI…TTAE, TETT…SIAT, TSNS…HSTP, TTET…SSIT, NSTS…PSFT, SHST…SHST, TETT…STSS, YSPS…STPS, TSSF…TATG, HSLP…KTIS, YTSS…ITTT, ITNT…PSFT, TTKT…ATSK, TTSY…HSPP, STPS…SSPS, HSTA…SSIT, TSSI…PPIF, TTET…SFTS, TEST…HTPP, TETP…HSTP, TKTT…TSTS, TTGT…TKTT, ITTT…RTSH, TTES…ETRS, TTET…HSPP, TETA…TTGI, SHST…ISHS, FTSS…TSHS, SYTS…HRTP, TETI…TTST, TGTS…TTSH, TEIT…ATSK, SHST…PPIF, TTES…HSPP, AETT…TTGI, FTSS…TSTE, TSSI…HRTP, SHST…NPSL, TTET…PPSF, TTSH…SSFT, TSSI…HSTP, TTTE…RSHS, TTSH…SKTI, SDST…SPSF, ITTT…TVPS, ITTE…SPLS, TSSI…LSSA, TTKT…TSTK, SHSS…TSTS, TTSF…TPSF, TTTE…QRSP, TTET…SPSS, SHST…HSTP, TGTE…SPSH, STTA…ITTT, TTET…PGFS, TKTT…HSTP, SIAT…HSPP, TSSF…STPV, PSYT…HSTP, TETT…STPI, TTET…TTET, EMTS…NTPS, FTTA…DIPT, SSPS…TSPT, IPST…LQTS, TSSM…TVPT, and SLPT…TPTT. Composition is skewed to low complexity over residues 513-538 and 547-559; these read SMTT…LSST and TSHT…PSTL. The segment covering 1620–1638 has biased composition (low complexity); it reads TSTPPITSSVTPTNTVTSM. The span at 1944–1956 shows a compositional bias: polar residues; sequence TTSATMEPPSSSV. Residues 1957-1968 show a composition bias toward low complexity; it reads AATDTGQTTFTS. Residues 2066-2091 are compositionally biased toward polar residues; the sequence is NASSMTTSETTYPNSPTGPVTNSMSK. The span at 2096–2107 shows a compositional bias: low complexity; it reads ASMTQTSSTATS. Residues 2113 to 2123 show a composition bias toward polar residues; it reads PSGSTTEIAKS. Residues 2170-2185 show a composition bias toward low complexity; that stretch reads STSMTPSTVSTSIPTS. Positions 2186-2195 are enriched in polar residues; that stretch reads QPKTVNSSSG. Composition is skewed to low complexity over residues 2292-2308 and 2442-2458; these read SSPP…AEST and RSTP…PTST. Residues 2591-2603 show a composition bias toward low complexity; it reads SAMSTSDIPSSPS. 2 stretches are compositionally biased toward low complexity: residues 2929–2944 and 3074–3097; these read STDI…TPSS and ETPS…TATS. A compositionally biased stretch (polar residues) spans 3098–3109; it reads PETNTLTPTPDI. The segment covering 3309–3359 has biased composition (low complexity); sequence TTSHSTPSFTSPIATTKTSSHSSPSFTSSIATLETTSHSTPSFTSSITTNS. The span at 3360 to 3370 shows a compositional bias: polar residues; that stretch reads HSTPRFSSSIA. The span at 3371-3385 shows a compositional bias: low complexity; it reads TRETTSHSTSSFTPS. Residues 3386–3395 show a composition bias toward polar residues; that stretch reads IATTKTNSNS. Over residues 3420 to 3452 the composition is skewed to low complexity; that stretch reads ITTTETTSHSTPSFTSSMATTKTTSHSTPSFTS. Residues 3453–3462 show a composition bias toward polar residues; it reads PIATRETTSH. The span at 3463–3481 shows a compositional bias: low complexity; it reads STPSFTSLITTTKTTSHST. The span at 3740-3749 shows a compositional bias: polar residues; it reads ITTIETPSHG. Positions 3750–3785 are enriched in low complexity; the sequence is TPSFTSSITSTETTSHSSPSFISSITTTEITSHSTP. The segment covering 3786 to 3812 has biased composition (polar residues); it reads RFTSSITTMETPSHSTPNFTSSITTAE. Composition is skewed to low complexity over residues 4020–4042 and 4067–4096; these read STPS…PSFT and TSNS…SSMT. A compositionally biased stretch (polar residues) spans 4097–4106; that stretch reads ATETTSHSTP. 2 stretches are compositionally biased toward low complexity: residues 4182–4228 and 4237–4249; these read TTET…PSFT and TSHS…SSIT. The segment covering 4557-4574 has biased composition (low complexity); that stretch reads TETTSNSSPSFTSSITNT. Polar residues predominate over residues 4575 to 4601; it reads KTTSYSPPGFTSSIPATETTSRSPPGF. Residues 4602 to 4617 show a composition bias toward low complexity; sequence TSSITTTETTSHSTSS. Low complexity predominate over residues 4802-4827; it reads TSSFTSSITSTETTSHSTPSLTSSIT. The span at 5137-5158 shows a compositional bias: low complexity; that stretch reads TPSHITPSFTSTITTSESTSHS. Over residues 5159–5170 the composition is skewed to polar residues; that stretch reads NPSLTSAITTTE. Composition is skewed to low complexity over residues 5174-5203 and 5458-5486; these read HSPP…ITTT and TEST…PSFT. Positions 5834–5858 are enriched in low complexity; sequence TTSYSTPSITSSITTTERTSHSTPS. Residues 5859–5874 are compositionally biased toward polar residues; it reads YTSSIATRETPSHTVP. Low complexity predominate over residues 5875–5889; sequence SFTSSITTTESTSHS. Polar residues predominate over residues 5890–5901; that stretch reads NPSLTSAITTTE. A compositionally biased stretch (low complexity) spans 6045–6059; it reads SFTSSITTTDSTSHS. Residues 6060–6071 show a composition bias toward polar residues; the sequence is NPSLTSAITTTE. A compositionally biased stretch (low complexity) spans 6172–6185; the sequence is TESTSHSTPSFTSS. Over residues 6186–6197 the composition is skewed to polar residues; the sequence is IATTETTSHTPP. The segment covering 6456–6475 has biased composition (low complexity); sequence TETPSHSTPSFPSSITTTQS. Residues 6852–6867 are compositionally biased toward polar residues; it reads HNTLGLSSSVDTTKTT. The span at 6946-6965 shows a compositional bias: low complexity; sequence ITTTETTSHSTPSITSSVTT. The span at 6999–7018 shows a compositional bias: polar residues; it reads TTESTSHSNPSLTSAITTTE. The span at 7172 to 7206 shows a compositional bias: low complexity; that stretch reads TASHSNPSSTSSITTTESTSHSPPRSTSAIATTGI. Composition is skewed to low complexity over residues 7300-7329 and 7400-7427; these read TSSI…TSHS and SYTS…STET. Over residues 7476–7491 the composition is skewed to polar residues; that stretch reads TETISHSPPSFTSLTN. The span at 7492–7532 shows a compositional bias: low complexity; that stretch reads STETTSHSPPSFTSSSTTTETPSHSTPGFSSSIATSKTTST. 2 stretches are compositionally biased toward low complexity: residues 7734-7766 and 7922-7944; these read TSHS…ATSK and SHST…STPS. The span at 7945 to 7987 shows a compositional bias: polar residues; the sequence is YTSSIATSETPSHTVPSFTSLITTTDSTSHSNPSLTSAITTTE. The segment covering 8088-8101 has biased composition (low complexity); sequence TESTSHSTPSFTSS. Residues 8102 to 8113 show a composition bias toward polar residues; sequence IATTETTSHTPP. The segment covering 8372 to 8391 has biased composition (low complexity); it reads TETPSHSTPSFPSSITTTQS. Residues 8768–8783 show a composition bias toward polar residues; the sequence is HNTLGLSSSVDTTKTT. A compositionally biased stretch (low complexity) spans 8862 to 8881; sequence ITTTETTSHSTPSITSSVTT. Positions 8915-8934 are enriched in polar residues; that stretch reads TTESTSHSNPSLTSAITTTE. 2 stretches are compositionally biased toward low complexity: residues 9067-9081 and 9088-9122; these read PTTE…SFTS and TASH…TTGI. The segment covering 9335-9360 has biased composition (low complexity); sequence TSSITTTETPSHSSPSFPSSITSTET. Polar residues predominate over residues 9409–9424; sequence TETISHSPPSFTSLTN. Composition is skewed to low complexity over residues 9425-9465, 9566-9585, and 9612-9624; these read STET…TTST, SHST…TSHS, and TTET…PSFT. Positions 9625–9661 are enriched in polar residues; that stretch reads SSIATAETTSHSPPSFTSLITTSETPSHSNPSFTSLI. Over residues 9662 to 9674 the composition is skewed to low complexity; sequence TTTESTSHSPPSF. Composition is skewed to polar residues over residues 9892-9903 and 9921-9933; these read NPSLTSAITNTE and TTSH…TSLI. Positions 9934–9973 are enriched in low complexity; it reads TSTETTSHSPPSFTSSSTTTETPSHSTPGFSSSIATSKTI. Positions 10120–10130 are enriched in low complexity; the sequence is ITTTETTSHST. The segment covering 10131 to 10166 has biased composition (polar residues); sequence PNITSSVTTTERTSHSTPSYTSSIATGETPSHTVPS. 2 stretches are compositionally biased toward low complexity: residues 10196 to 10271 and 10394 to 10421; these read HSPP…SFTS and TSET…STPS. A compositionally biased stretch (polar residues) spans 10750–10791; sequence TTTETTSHSPPRFTSSITTTKTPSDSTPVFTPSIATSETSSH. Low complexity-rich tracts occupy residues 10792-10828, 10887-10937, and 10950-11032; these read STPG…QRSP, TTET…SSIT, and PSSI…SPSS. The segment covering 11278-11291 has biased composition (low complexity); the sequence is TETTSHSPPHFTSS. Positions 11292 to 11317 are enriched in polar residues; the sequence is ITRTKTTSHRPPTFTSSITTTESPSH. Positions 11566 to 11682 are enriched in low complexity; that stretch reads TTETTSHSIP…SHSTSGFTSS (117 aa). 2 stretches are compositionally biased toward polar residues: residues 11683-11697 and 11754-11769; these read NATT…PGFS and TKTT…SSIA. 2 stretches are compositionally biased toward low complexity: residues 11770 to 11779 and 11818 to 11880; these read STKTTSHSTP and SIAT…SHST. 2 stretches are compositionally biased toward polar residues: residues 11881–11896 and 11903–11912; these read PSFT…TSHS and LIPTTKTTLH. 2 stretches are compositionally biased toward low complexity: residues 11913–11949 and 12067–12091; these read SPPS…HSPP and TSSF…TSSI. The segment covering 12092–12103 has biased composition (polar residues); sequence AVTETPSDSTPV. A compositionally biased stretch (low complexity) spans 12280–12309; sequence TETTSHSAPNFSSSITSTETTSHSTPSFTS. Over residues 12310-12323 the composition is skewed to polar residues; it reads AITSTETTSHSTPI. Over residues 12364–12412 the composition is skewed to low complexity; that stretch reads TTETTSHSTPGFASSITTTKTTSHSTPSFTSSIATSNTTSSSTPGFTSS. Residues 12413–12439 are compositionally biased toward polar residues; it reads IATTETTSRSTPGFTSSIVTTETTSPH. Positions 12440-12452 are enriched in low complexity; it reads TPGFTSSITTTET. The segment covering 12468–12477 has biased composition (polar residues); sequence EMTSHSTPSL. 6 stretches are compositionally biased toward low complexity: residues 12478–12569, 12624–12639, 12681–12692, 12794–12805, 12990–13003, and 13073–13086; these read TFSI…VTTP, TSTP…DIPT, SSPSIQSTETSS, QTTPSIPSLQTS, PESE…ASSS, and TSET…TPTT. An EGF-like domain is found at 13130–13163; the sequence is SGDRCQLQTRCQNGGQWDGLKCQCPSTFYGSSCE. 2 disulfide bridges follow: Cys-13134/Cys-13140 and Cys-13153/Cys-13162. An SEA domain is found at 13172-13297; that stretch reads DVVETEVGME…DSIKVNNNSK (126 aa). Residues 13381 to 13401 traverse the membrane as a helical segment; that stretch reads LVGGLTAGAALLVLLLLALGV.

Highly O-glycosylated and probably also N-glycosylated. As to expression, fetal and adult small intestine and fetal and adult colon.

Its subcellular location is the membrane. In terms of biological role, major glycoprotein component of a variety of mucus gels. Thought to provide a protective, lubricating barrier against particles and infectious agents at mucosal surfaces. The chain is Mucin-3B from Homo sapiens (Human).